The sequence spans 304 residues: Porphobilinogen deaminase (304 aa).

Cysteine 239 carries the S-(dipyrrolylmethanemethyl)cysteine modification.

This sequence belongs to the HMBS family. As to quaternary structure, monomer. Requires dipyrromethane as cofactor.

It catalyses the reaction 4 porphobilinogen + H2O = hydroxymethylbilane + 4 NH4(+). Its pathway is porphyrin-containing compound metabolism; protoporphyrin-IX biosynthesis; coproporphyrinogen-III from 5-aminolevulinate: step 2/4. Its function is as follows. Tetrapolymerization of the monopyrrole PBG into the hydroxymethylbilane pre-uroporphyrinogen in several discrete steps. The chain is Porphobilinogen deaminase from Brucella ovis (strain ATCC 25840 / 63/290 / NCTC 10512).